The sequence spans 274 residues: uncharacterized protein (274 aa).

Positions 1 to 15 are enriched in basic and acidic residues; that stretch reads MEESKTKRKEDRIDL. Positions 1–40 are disordered; sequence MEESKTKRKEDRIDLKNTPPQKKSKRDSTNDETARTSLRS. Positions 41 to 87 constitute a G-patch domain; sequence IMPRGYKMMENMGYKEGETLGSNESALKEPIKVEINTKRRGIRAEKP.

The protein resides in the cytoplasm. Its subcellular location is the nucleus. This is an uncharacterized protein from Saccharomyces cerevisiae (strain ATCC 204508 / S288c) (Baker's yeast).